The chain runs to 431 residues: UDP-N-acetylglucosamine 1-carboxyvinyltransferase (431 aa).

22–23 contacts phosphoenolpyruvate; the sequence is KN. Arg92 lines the UDP-N-acetyl-alpha-D-glucosamine pocket. Asp116 serves as the catalytic Proton donor. Residues 121 to 125, Asp307, and Ile330 each bind UDP-N-acetyl-alpha-D-glucosamine; that span reads RPIDQ.

Belongs to the EPSP synthase family. MurA subfamily.

Its subcellular location is the cytoplasm. The enzyme catalyses phosphoenolpyruvate + UDP-N-acetyl-alpha-D-glucosamine = UDP-N-acetyl-3-O-(1-carboxyvinyl)-alpha-D-glucosamine + phosphate. Its pathway is cell wall biogenesis; peptidoglycan biosynthesis. Its function is as follows. Cell wall formation. Adds enolpyruvyl to UDP-N-acetylglucosamine. The protein is UDP-N-acetylglucosamine 1-carboxyvinyltransferase of Lactobacillus acidophilus (strain ATCC 700396 / NCK56 / N2 / NCFM).